We begin with the raw amino-acid sequence, 1475 residues long: Sex-determining transformer protein 2 (1475 aa).

The signal sequence occupies residues 1–31; sequence MKLKYNKLLVSVVIVTFVTFGLLLAECFGKS. A run of 11 helical transmembrane segments spans residues 446–466, 474–494, 496–516, 589–609, 737–757, 902–922, 928–948, 952–972, 979–999, 1034–1054, and 1060–1080; these read TIHF…IFVW, AFMF…VCST, GVIV…LANL, WGCT…FIDS, GVIL…LLFI, AVGV…LFAF, AGIF…TPTI, FLFS…VHLF, IYTN…FCAL, IAQF…ICSI, and IFFV…FNSI. An interaction with fem-3 region spans residues 1133–1273; sequence EFSIKRSSPP…RERNLMNKRS (141 aa). Disordered regions lie at residues 1142-1194 and 1267-1330; these read PCRY…GDNT and NLMN…VDEP. Over residues 1178 to 1188 the composition is skewed to basic residues; the sequence is RSPKTGNKRVR. Residues 1276 to 1310 show a composition bias toward basic and acidic residues; sequence QRRESRNIEKMKKSQENLDKEKSEEKISESKKNQD. An MX regulatory domain; required for tra-1 binding region spans residues 1392–1413; sequence CEDIYWTHRTGQLPPGLQVPRR. The segment at 1424-1475 is disordered; it reads TPPPEDLNWVPPAESPPIPIPQQAFDLLEERRRNHREQQDEAREGDLSDPEV. Over residues 1451–1469 the composition is skewed to basic and acidic residues; it reads LEERRRNHREQQDEAREGD.

As to quaternary structure, interacts with tra-1 and fem-3. Undergoes cleavage by tra-3 to produce a feminizing carboxy-terminal isoform Tra-2B. Somatic and germline tissues. Isoform Tra-2B is specific to oocytes.

Its subcellular location is the membrane. Plays a major role in controlling sexual cell fates. Promotes female development in XX animals where it sequesters one or more of the FEM proteins to the membrane thereby freeing the tra-1 protein (a putative transcription factor) to enter the nucleus and promote female development. In XO animals it acts as a receptor for her-1 which prevents it from binding to FEM proteins thereby repressing the activity of tra-1. Negatively regulates male development when bound to fem-3 and is required together with tra-1 for promoting spermatogenesis. Also required for feminizing tra-3 activity. This Caenorhabditis elegans protein is Sex-determining transformer protein 2 (tra-2).